A 20-amino-acid chain; its full sequence is 54 kDa cell wall protein (20 aa).

The segment at 1–20 (KVPVDDQFRRVNNGGATDTR) is disordered.

Its subcellular location is the secreted. The protein resides in the cell wall. The sequence is that of 54 kDa cell wall protein from Arabidopsis thaliana (Mouse-ear cress).